A 272-amino-acid polypeptide reads, in one-letter code: Phosphate import ATP-binding protein PstB (272 aa).

The 242-residue stretch at 26 to 267 folds into the ABC transporter domain; it reads VAARNLNFYY…PADRRTQDYI (242 aa). Residue 58-65 participates in ATP binding; that stretch reads GPSGCGKS.

It belongs to the ABC transporter superfamily. Phosphate importer (TC 3.A.1.7) family. The complex is composed of two ATP-binding proteins (PstB), two transmembrane proteins (PstC and PstA) and a solute-binding protein (PstS).

The protein resides in the cell inner membrane. It carries out the reaction phosphate(out) + ATP + H2O = ADP + 2 phosphate(in) + H(+). Functionally, part of the ABC transporter complex PstSACB involved in phosphate import. Responsible for energy coupling to the transport system. The sequence is that of Phosphate import ATP-binding protein PstB from Nitrobacter hamburgensis (strain DSM 10229 / NCIMB 13809 / X14).